A 525-amino-acid polypeptide reads, in one-letter code: EGF domain-specific O-linked N-acetylglucosamine transferase (525 aa).

Positions 1–24 (MVPLRLVLLLHIIHFSCENEVGSA) are cleaved as a signal peptide. The Required for optimal activity motif lies at 293-295 (DYE). Asn-352 carries an N-linked (GlcNAc...) asparagine glycan. The Prevents secretion from ER motif lies at 522 to 525 (RDEL).

It belongs to the glycosyltransferase 61 family.

The protein resides in the endoplasmic reticulum lumen. The enzyme catalyses L-seryl-[protein] + UDP-N-acetyl-alpha-D-glucosamine = 3-O-(N-acetyl-beta-D-glucosaminyl)-L-seryl-[protein] + UDP + H(+). It carries out the reaction L-threonyl-[protein] + UDP-N-acetyl-alpha-D-glucosamine = 3-O-(N-acetyl-beta-D-glucosaminyl)-L-threonyl-[protein] + UDP + H(+). Its function is as follows. Catalyzes the transfer of a single N-acetylglucosamine from UDP-GlcNAc to a serine or threonine residue in extracellular proteins resulting in their modification with a beta-linked N-acetylglucosamine (O-GlcNAc). Specifically glycosylates the Thr residue located between the fifth and sixth conserved cysteines of folded EGF-like domains. The sequence is that of EGF domain-specific O-linked N-acetylglucosamine transferase (eogt) from Xenopus laevis (African clawed frog).